Consider the following 228-residue polypeptide: 2,3-bisphosphoglycerate-dependent phosphoglycerate mutase (228 aa).

Residues 8–15 (RHGLSEWN), 21–22 (TG), arginine 60, 87–90 (ERHY), lysine 98, 114–115 (RR), and 183–184 (GN) each bind substrate. The active-site Tele-phosphohistidine intermediate is histidine 9. The active-site Proton donor/acceptor is glutamate 87.

The protein belongs to the phosphoglycerate mutase family. BPG-dependent PGAM subfamily.

It catalyses the reaction (2R)-2-phosphoglycerate = (2R)-3-phosphoglycerate. It functions in the pathway carbohydrate degradation; glycolysis; pyruvate from D-glyceraldehyde 3-phosphate: step 3/5. Its function is as follows. Catalyzes the interconversion of 2-phosphoglycerate and 3-phosphoglycerate. This is 2,3-bisphosphoglycerate-dependent phosphoglycerate mutase from Enterococcus faecalis (strain ATCC 700802 / V583).